The primary structure comprises 127 residues: Photosystem II extrinsic protein U (127 aa).

An N-terminal signal peptide occupies residues 1–31 (MSRLFRRLSTLLLCSLLVLGVWLTQPLSVQA).

It belongs to the PsbU family. PSII is composed of 1 copy each of membrane proteins PsbA, PsbB, PsbC, PsbD, PsbE, PsbF, PsbH, PsbI, PsbJ, PsbK, PsbL, PsbM, PsbT, PsbX, PsbY, PsbZ, Psb30/Ycf12, peripheral proteins PsbO, CyanoQ (PsbQ), PsbU, PsbV and a large number of cofactors. It forms dimeric complexes.

It is found in the cellular thylakoid membrane. Its function is as follows. One of the extrinsic, lumenal subunits of photosystem II (PSII). PSII is a light-driven water plastoquinone oxidoreductase, using light energy to abstract electrons from H(2)O, generating a proton gradient subsequently used for ATP formation. The extrinsic proteins stabilize the structure of photosystem II oxygen-evolving complex (OEC), the ion environment of oxygen evolution and protect the OEC against heat-induced inactivation. In Synechococcus sp. (strain RCC307), this protein is Photosystem II extrinsic protein U.